A 219-amino-acid chain; its full sequence is Orotate phosphoribosyltransferase (219 aa).

Lys-26 lines the 5-phospho-alpha-D-ribose 1-diphosphate pocket. 34 to 35 (FF) contributes to the orotate binding site. 5-phospho-alpha-D-ribose 1-diphosphate contacts are provided by residues 72–73 (YK), Arg-98, Lys-99, Lys-102, His-104, and 124–132 (DDVITAGTA). Positions 128 and 156 each coordinate orotate.

This sequence belongs to the purine/pyrimidine phosphoribosyltransferase family. PyrE subfamily. In terms of assembly, homodimer. Requires Mg(2+) as cofactor.

The enzyme catalyses orotidine 5'-phosphate + diphosphate = orotate + 5-phospho-alpha-D-ribose 1-diphosphate. It functions in the pathway pyrimidine metabolism; UMP biosynthesis via de novo pathway; UMP from orotate: step 1/2. Its function is as follows. Catalyzes the transfer of a ribosyl phosphate group from 5-phosphoribose 1-diphosphate to orotate, leading to the formation of orotidine monophosphate (OMP). The sequence is that of Orotate phosphoribosyltransferase from Xylella fastidiosa (strain M23).